We begin with the raw amino-acid sequence, 145 residues long: Large-conductance mechanosensitive channel (145 aa).

The next 3 membrane-spanning stretches (helical) occupy residues 10 to 30, 41 to 61, and 87 to 107; these read FALK…GAFA, IMPI…MFLI, and GNFI…FMMV.

It belongs to the MscL family. In terms of assembly, homopentamer.

The protein resides in the cell inner membrane. In terms of biological role, channel that opens in response to stretch forces in the membrane lipid bilayer. May participate in the regulation of osmotic pressure changes within the cell. In Psychrobacter arcticus (strain DSM 17307 / VKM B-2377 / 273-4), this protein is Large-conductance mechanosensitive channel.